The primary structure comprises 202 residues: Recombination protein RecR (202 aa).

Residues Cys-61–Cys-76 form a C4-type zinc finger. Residues Ser-84–Pro-179 form the Toprim domain.

Belongs to the RecR family.

In terms of biological role, may play a role in DNA repair. It seems to be involved in an RecBC-independent recombinational process of DNA repair. It may act with RecF and RecO. The protein is Recombination protein RecR of Bordetella petrii (strain ATCC BAA-461 / DSM 12804 / CCUG 43448).